The sequence spans 614 residues: Vitamin B12 transporter BtuB (614 aa).

An N-terminal signal peptide occupies residues 1-20 (MIKKASLLTACSVTAFSAWA). Residues 26–33 (DTLVVTAN) carry the TonB box motif. One can recognise a TBDR plug domain in the interval 38–152 (PRSTVLAPTT…IGGVVNIITT (115 aa)). Residues Leu-83, Ser-85, Asn-92, and 110–111 (VS) each bind cyanocob(III)alamin. The TBDR beta-barrel domain maps to 155-614 (HPGTEISAGW…EYTLXGSYTF (460 aa)). The next 3 beta stranded transmembrane spans lie at 158–165 (TEISAGWG), 169–178 (YQNYDVSTQQ), and 184–195 (TRVTLLGDYAHT). Asp-199, Gln-211, Asp-213, and Asp-215 together coordinate Ca(2+). 2 consecutive transmembrane segments (beta stranded) span residues 217 to 227 (FLSKTLYGALE) and 232 to 248 (DAWSGFVRGYGYDNRTN). The Ca(2+) site is built by Tyr-249 and Asp-250. Cyanocob(III)alamin is bound at residue Ala-251. Asp-261 is a binding site for Ca(2+). The next 14 membrane-spanning stretches (beta stranded) occupy residues 263 to 277 (RKLYSQSWDAGLRYN), 279 to 296 (ELIKSQLITSYSHSKDYN), 309 to 325 (TLDEMKQYTVQWANNII), 328 to 337 (HGNIGAGVDW), 353 to 369 (YDQRNTGIYLTGLQQVG), 371 to 381 (FTFEGAGRSDD), 385 to 400 (FGRHGTWQTSAGWEFI), 403 to 417 (YRFIASYGTSYKAPN), 434 to 443 (KSKQWEGAFE), 449 to 458 (VNWRISGYRN), 473 to 490 (YYNEGKARIKGVEATANF), 494 to 509 (PLTHTVSYDYVDARNA), 517 to 529 (RRAKQQVKYQLDW), and 535 to 550 (DWGITYQYLGTRYDKD). Thr-309 contributes to the cyanocob(III)alamin binding site. Arg-517 lines the cyanocob(III)alamin pocket. Tyr-551 is a cyanocob(III)alamin binding site. The next 3 beta stranded transmembrane spans lie at 558 to 572 (TVKMGGVSLWDLAVA), 585 to 596 (IANLFDKDYETV), and 602 to 614 (AGREYTLXGSYTF). The TonB C-terminal box signature appears at 597-614 (YGYQTAGREYTLXGSYTF).

The protein belongs to the TonB-dependent receptor family. BtuB (TC 1.B.14.3.1) subfamily.

It localises to the cell outer membrane. In terms of biological role, involved in the active translocation of vitamin B12 (cyanocobalamin) across the outer membrane to the periplasmic space. It derives its energy for transport by interacting with the trans-periplasmic membrane protein TonB. This Escherichia coli O6:H1 (strain CFT073 / ATCC 700928 / UPEC) protein is Vitamin B12 transporter BtuB.